Here is a 213-residue protein sequence, read N- to C-terminus: Motile sperm domain-containing protein 1 (213 aa).

Residues 16 to 143 (PVFVFPTELI…KEHLTESLFF (128 aa)) enclose the MSP domain. The next 2 membrane-spanning stretches (helical) occupy residues 159–179 (SLLTVFLGVVCIAALMLPTLG) and 191–211 (LSVNQKLVAAYILGLITMAIL). Residues 205 to 208 (LITM) carry the Nuclear export signal motif.

Its subcellular location is the endoplasmic reticulum membrane. The protein resides in the golgi apparatus membrane. In terms of biological role, plays a role in differentiation and/or proliferation of mesenchymal stem cells. Proposed to be involved in epithelial-to-mesenchymal transition (EMT). However, another study suggests that it is not required for EMT or stem cell self-renewal and acts during later stages of differentiation. This Pongo abelii (Sumatran orangutan) protein is Motile sperm domain-containing protein 1 (MOSPD1).